Here is a 182-residue protein sequence, read N- to C-terminus: ATP-dependent protease subunit HslV (182 aa).

T12 is an active-site residue. A167, C170, and T173 together coordinate Na(+).

The protein belongs to the peptidase T1B family. HslV subfamily. As to quaternary structure, a double ring-shaped homohexamer of HslV is capped on each side by a ring-shaped HslU homohexamer. The assembly of the HslU/HslV complex is dependent on binding of ATP.

The protein resides in the cytoplasm. The catalysed reaction is ATP-dependent cleavage of peptide bonds with broad specificity.. Allosterically activated by HslU binding. Protease subunit of a proteasome-like degradation complex believed to be a general protein degrading machinery. In Chlorobium phaeobacteroides (strain DSM 266 / SMG 266 / 2430), this protein is ATP-dependent protease subunit HslV.